The chain runs to 329 residues: GMP reductase (329 aa).

The Thioimidate intermediate role is filled by Cys178. 207–230 (IIADGGIRNNGDIAKSIRFGATMC) is a binding site for NADP(+).

Belongs to the IMPDH/GMPR family. GuaC type 2 subfamily.

The enzyme catalyses IMP + NH4(+) + NADP(+) = GMP + NADPH + 2 H(+). Its function is as follows. Catalyzes the irreversible NADPH-dependent deamination of GMP to IMP. It functions in the conversion of nucleobase, nucleoside and nucleotide derivatives of G to A nucleotides, and in maintaining the intracellular balance of A and G nucleotides. The chain is GMP reductase from Lacticaseibacillus paracasei (strain ATCC 334 / BCRC 17002 / CCUG 31169 / CIP 107868 / KCTC 3260 / NRRL B-441) (Lactobacillus paracasei).